The primary structure comprises 324 residues: Uroporphyrinogen decarboxylase (324 aa).

Residues 14-18 (RQAGR), Phe-32, Asp-63, Tyr-136, Ser-191, and His-302 each bind substrate.

It belongs to the uroporphyrinogen decarboxylase family. As to quaternary structure, homodimer.

It localises to the cytoplasm. It catalyses the reaction uroporphyrinogen III + 4 H(+) = coproporphyrinogen III + 4 CO2. It participates in porphyrin-containing compound metabolism; protoporphyrin-IX biosynthesis; coproporphyrinogen-III from 5-aminolevulinate: step 4/4. Its function is as follows. Catalyzes the decarboxylation of four acetate groups of uroporphyrinogen-III to yield coproporphyrinogen-III. This is Uroporphyrinogen decarboxylase from Neorickettsia sennetsu (strain ATCC VR-367 / Miyayama) (Ehrlichia sennetsu).